We begin with the raw amino-acid sequence, 301 residues long: Phosphatidylserine decarboxylase proenzyme (301 aa).

Catalysis depends on charge relay system; for autoendoproteolytic cleavage activity residues Asp115, His171, and Ser258. Residue Ser258 is the Schiff-base intermediate with substrate; via pyruvic acid; for decarboxylase activity of the active site. Ser258 carries the pyruvic acid (Ser); by autocatalysis modification.

The protein belongs to the phosphatidylserine decarboxylase family. PSD-B subfamily. Prokaryotic type II sub-subfamily. Heterodimer of a large membrane-associated beta subunit and a small pyruvoyl-containing alpha subunit. Requires pyruvate as cofactor. Post-translationally, is synthesized initially as an inactive proenzyme. Formation of the active enzyme involves a self-maturation process in which the active site pyruvoyl group is generated from an internal serine residue via an autocatalytic post-translational modification. Two non-identical subunits are generated from the proenzyme in this reaction, and the pyruvate is formed at the N-terminus of the alpha chain, which is derived from the carboxyl end of the proenzyme. The autoendoproteolytic cleavage occurs by a canonical serine protease mechanism, in which the side chain hydroxyl group of the serine supplies its oxygen atom to form the C-terminus of the beta chain, while the remainder of the serine residue undergoes an oxidative deamination to produce ammonia and the pyruvoyl prosthetic group on the alpha chain. During this reaction, the Ser that is part of the protease active site of the proenzyme becomes the pyruvoyl prosthetic group, which constitutes an essential element of the active site of the mature decarboxylase.

It is found in the cell membrane. It catalyses the reaction a 1,2-diacyl-sn-glycero-3-phospho-L-serine + H(+) = a 1,2-diacyl-sn-glycero-3-phosphoethanolamine + CO2. The protein operates within phospholipid metabolism; phosphatidylethanolamine biosynthesis; phosphatidylethanolamine from CDP-diacylglycerol: step 2/2. Its function is as follows. Catalyzes the formation of phosphatidylethanolamine (PtdEtn) from phosphatidylserine (PtdSer). In Chlamydia pneumoniae (Chlamydophila pneumoniae), this protein is Phosphatidylserine decarboxylase proenzyme.